We begin with the raw amino-acid sequence, 499 residues long: L-arabinose isomerase (499 aa).

Residues E306, E333, H350, and H449 each coordinate Mn(2+).

Belongs to the arabinose isomerase family. Mn(2+) is required as a cofactor.

The enzyme catalyses beta-L-arabinopyranose = L-ribulose. Its pathway is carbohydrate degradation; L-arabinose degradation via L-ribulose; D-xylulose 5-phosphate from L-arabinose (bacterial route): step 1/3. Functionally, catalyzes the conversion of L-arabinose to L-ribulose. The protein is L-arabinose isomerase of Aeromonas salmonicida (strain A449).